The following is a 404-amino-acid chain: Cysteine desulfurase IscS (404 aa).

Pyridoxal 5'-phosphate is bound by residues 75–76, N155, Q183, and 203–205; these read AT and SAH. K206 bears the N6-(pyridoxal phosphate)lysine mark. A pyridoxal 5'-phosphate-binding site is contributed by T243. C328 (cysteine persulfide intermediate) is an active-site residue. C328 contacts [2Fe-2S] cluster.

It belongs to the class-V pyridoxal-phosphate-dependent aminotransferase family. NifS/IscS subfamily. In terms of assembly, homodimer. Forms a heterotetramer with IscU, interacts with other sulfur acceptors. Requires pyridoxal 5'-phosphate as cofactor.

It is found in the cytoplasm. It catalyses the reaction (sulfur carrier)-H + L-cysteine = (sulfur carrier)-SH + L-alanine. It functions in the pathway cofactor biosynthesis; iron-sulfur cluster biosynthesis. In terms of biological role, master enzyme that delivers sulfur to a number of partners involved in Fe-S cluster assembly, tRNA modification or cofactor biosynthesis. Catalyzes the removal of elemental sulfur atoms from cysteine to produce alanine. Functions as a sulfur delivery protein for Fe-S cluster synthesis onto IscU, an Fe-S scaffold assembly protein, as well as other S acceptor proteins. This is Cysteine desulfurase IscS from Proteus mirabilis (strain HI4320).